The primary structure comprises 417 residues: NADH-quinone oxidoreductase subunit D (417 aa).

The protein belongs to the complex I 49 kDa subunit family. As to quaternary structure, NDH-1 is composed of 14 different subunits. Subunits NuoB, C, D, E, F, and G constitute the peripheral sector of the complex.

Its subcellular location is the cell inner membrane. The enzyme catalyses a quinone + NADH + 5 H(+)(in) = a quinol + NAD(+) + 4 H(+)(out). Its function is as follows. NDH-1 shuttles electrons from NADH, via FMN and iron-sulfur (Fe-S) centers, to quinones in the respiratory chain. The immediate electron acceptor for the enzyme in this species is believed to be ubiquinone. Couples the redox reaction to proton translocation (for every two electrons transferred, four hydrogen ions are translocated across the cytoplasmic membrane), and thus conserves the redox energy in a proton gradient. In Burkholderia multivorans (strain ATCC 17616 / 249), this protein is NADH-quinone oxidoreductase subunit D.